Here is a 233-residue protein sequence, read N- to C-terminus: Large ribosomal subunit protein uL1 (233 aa).

Belongs to the universal ribosomal protein uL1 family. In terms of assembly, part of the 50S ribosomal subunit.

Its function is as follows. Binds directly to 23S rRNA. The L1 stalk is quite mobile in the ribosome, and is involved in E site tRNA release. Functionally, protein L1 is also a translational repressor protein, it controls the translation of the L11 operon by binding to its mRNA. The protein is Large ribosomal subunit protein uL1 of Shewanella denitrificans (strain OS217 / ATCC BAA-1090 / DSM 15013).